A 118-amino-acid chain; its full sequence is Small ribosomal subunit protein uS13 (118 aa).

The interval 94-118 is disordered; the sequence is SLPVRGQRTKTNARTRKGPRKAIKK.

The protein belongs to the universal ribosomal protein uS13 family. Part of the 30S ribosomal subunit. Forms a loose heterodimer with protein S19. Forms two bridges to the 50S subunit in the 70S ribosome.

In terms of biological role, located at the top of the head of the 30S subunit, it contacts several helices of the 16S rRNA. In the 70S ribosome it contacts the 23S rRNA (bridge B1a) and protein L5 of the 50S subunit (bridge B1b), connecting the 2 subunits; these bridges are implicated in subunit movement. Contacts the tRNAs in the A and P-sites. The chain is Small ribosomal subunit protein uS13 from Aeromonas hydrophila subsp. hydrophila (strain ATCC 7966 / DSM 30187 / BCRC 13018 / CCUG 14551 / JCM 1027 / KCTC 2358 / NCIMB 9240 / NCTC 8049).